Here is a 334-residue protein sequence, read N- to C-terminus: GTP 3',8-cyclase (334 aa).

The Radical SAM core domain maps to 13–239 (RFQRKFYYLR…KARADNDGPA (227 aa)). Position 22 (Arg-22) interacts with GTP. The [4Fe-4S] cluster site is built by Cys-29 and Cys-33. Tyr-35 provides a ligand contact to S-adenosyl-L-methionine. A [4Fe-4S] cluster-binding site is contributed by Cys-36. Arg-73 is a GTP binding site. Gly-77 is a binding site for S-adenosyl-L-methionine. Thr-104 is a GTP binding site. Residue Ser-128 participates in S-adenosyl-L-methionine binding. Residue Lys-165 participates in GTP binding. Residue Met-199 participates in S-adenosyl-L-methionine binding. [4Fe-4S] cluster is bound by residues Cys-262 and Cys-265. 267-269 (RLR) contributes to the GTP binding site. Cys-279 contacts [4Fe-4S] cluster.

The protein belongs to the radical SAM superfamily. MoaA family. As to quaternary structure, monomer and homodimer. [4Fe-4S] cluster serves as cofactor.

It carries out the reaction GTP + AH2 + S-adenosyl-L-methionine = (8S)-3',8-cyclo-7,8-dihydroguanosine 5'-triphosphate + 5'-deoxyadenosine + L-methionine + A + H(+). The protein operates within cofactor biosynthesis; molybdopterin biosynthesis. In terms of biological role, catalyzes the cyclization of GTP to (8S)-3',8-cyclo-7,8-dihydroguanosine 5'-triphosphate. The chain is GTP 3',8-cyclase from Vibrio cholerae serotype O1 (strain M66-2).